We begin with the raw amino-acid sequence, 403 residues long: Acetate kinase (403 aa).

A Mg(2+)-binding site is contributed by Asn7. ATP is bound at residue Lys14. Arg90 serves as a coordination point for substrate. Asp147 functions as the Proton donor/acceptor in the catalytic mechanism. ATP is bound by residues 207–211, 283–285, and 331–335; these read HIGNG, DMR, and GVGEN. Residue Glu386 participates in Mg(2+) binding.

Belongs to the acetokinase family. Homodimer. Mg(2+) serves as cofactor. Requires Mn(2+) as cofactor.

It is found in the cytoplasm. The enzyme catalyses acetate + ATP = acetyl phosphate + ADP. The protein operates within metabolic intermediate biosynthesis; acetyl-CoA biosynthesis; acetyl-CoA from acetate: step 1/2. Catalyzes the formation of acetyl phosphate from acetate and ATP. Can also catalyze the reverse reaction. Phosphorylates propionate (54%) in addition to acetate (100%). Uses GTP (100%), ITP (163%), UTP (56%), and CTP (21%) as phosphoryl donors in addition to ATP (100%). The polypeptide is Acetate kinase (Thermotoga maritima (strain ATCC 43589 / DSM 3109 / JCM 10099 / NBRC 100826 / MSB8)).